We begin with the raw amino-acid sequence, 367 residues long: Chorismate synthase (367 aa).

Arg48 contacts NADP(+). FMN is bound by residues Arg125–Ser127, Gly290, Lys305–Ser309, and Arg333.

The protein belongs to the chorismate synthase family. Homotetramer. FMNH2 is required as a cofactor.

It carries out the reaction 5-O-(1-carboxyvinyl)-3-phosphoshikimate = chorismate + phosphate. The protein operates within metabolic intermediate biosynthesis; chorismate biosynthesis; chorismate from D-erythrose 4-phosphate and phosphoenolpyruvate: step 7/7. Catalyzes the anti-1,4-elimination of the C-3 phosphate and the C-6 proR hydrogen from 5-enolpyruvylshikimate-3-phosphate (EPSP) to yield chorismate, which is the branch point compound that serves as the starting substrate for the three terminal pathways of aromatic amino acid biosynthesis. This reaction introduces a second double bond into the aromatic ring system. This chain is Chorismate synthase, found in Protochlamydia amoebophila (strain UWE25).